The sequence spans 123 residues: Potassium voltage-gated channel subfamily E member 2 (123 aa).

N-linked (GlcNAc...) asparagine glycosylation is found at asparagine 6 and asparagine 29. A helical transmembrane segment spans residues valine 49–valine 69. Residues serine 70 to proline 123 lie on the Cytoplasmic side of the membrane.

The protein belongs to the potassium channel KCNE family. As to quaternary structure, interacts with KCNB1. Associates with KCNH2/ERG1. May associate with KCNQ2 and KCNQ3. Associates with HCN1 and probably HCN2. Heteromultimer with KCNC2. Interacts with KCNC2. Interacts with KCNQ1; forms a heterooligomer complex that targets to the membrane raft and leading to currents with an apparently instantaneous activation, a rapid deactivation process and a linear current-voltage relationship and decreases the amplitude of the outward current.

It is found in the cell membrane. Its subcellular location is the apical cell membrane. Ancillary protein that functions as a regulatory subunit of the voltage-gated potassium (Kv) channel complex composed of pore-forming and potassium-conducting alpha subunits and of regulatory beta subunits. KCNE2 beta subunit modulates the gating kinetics and enhances stability of the channel complex. Alters the gating of the delayed rectifier Kv channel containing KCNB1 alpha subunit. Associates with KCNH2/HERG alpha subunit Kv channel to form the rapidly activating component of the delayed rectifying potassium current (IKr) in heart. May associate with KCNQ2 and/or KCNQ3 alpha subunits to modulate the native M-type current. May associate with HCN1 and HCN2 channel subunits to increase potassium current. Forms a heterooligomer complex with KCNQ1/KVLQT1 alpha subunits which leads to currents with an apparently instantaneous activation, a rapid deactivation process and a linear current-voltage relationship and decreases the amplitude of the outward current. KCNQ1-KCNE2 channel associates with Na(+)-coupled myo-inositol symporter in the apical membrane of choroid plexus epithelium and regulates the myo-inositol gradient between blood and cerebrospinal fluid with an impact on neuron excitability. The sequence is that of Potassium voltage-gated channel subfamily E member 2 (Kcne2) from Cavia porcellus (Guinea pig).